Consider the following 462-residue polypeptide: tRNA(Ile)-lysidine synthase (462 aa).

An ATP-binding site is contributed by 27–32; that stretch reads SGGPDS.

It belongs to the tRNA(Ile)-lysidine synthase family.

It is found in the cytoplasm. It catalyses the reaction cytidine(34) in tRNA(Ile2) + L-lysine + ATP = lysidine(34) in tRNA(Ile2) + AMP + diphosphate + H(+). Ligates lysine onto the cytidine present at position 34 of the AUA codon-specific tRNA(Ile) that contains the anticodon CAU, in an ATP-dependent manner. Cytidine is converted to lysidine, thus changing the amino acid specificity of the tRNA from methionine to isoleucine. This Clostridioides difficile (strain 630) (Peptoclostridium difficile) protein is tRNA(Ile)-lysidine synthase.